The chain runs to 666 residues: Chaperone protein dnaK1 (666 aa).

The residue at position 198 (T198) is a Phosphothreonine; by autocatalysis.

This sequence belongs to the heat shock protein 70 family.

Functionally, acts as a chaperone. This is Chaperone protein dnaK1 (dnaK1) from Prochlorococcus marinus (strain SARG / CCMP1375 / SS120).